Consider the following 521-residue polypeptide: Cytoplasmic polyadenylation element-binding protein 2 (521 aa).

Positions 1-11 are enriched in pro residues; the sequence is MNLPQQQPPAA. Disordered regions lie at residues 1-35 and 50-88; these read MNLP…QAAA and PLLK…NMGI. The segment covering 12-35 has biased composition (low complexity); the sequence is APQQPQSRRSPVSPQLQQQHQAAA. Phosphoserine is present on serine 21. Polar residues predominate over residues 55–70; sequence SPWSNHQNSGWGTASM. RRM domains are found at residues 264-355 and 372-454; these read RKVF…PWNL and KTIF…PYVL.

Belongs to the RRM CPEB family. In terms of assembly, interacts with TENT2/GLD2. In terms of tissue distribution, expressed in embryo, cerebellum, salivary gland, thymus, heart, liver, lung, spleen, kidney, intestine, ovary and round spermatids. Weakly expressed in granular cells of dentate gyrus and the pyramidal cells of CA3 and CA1 of the hippocampus.

It localises to the cytoplasm. May play a role in translational regulation of stored mRNAs in transcriptionally inactive haploid spermatids. Binds to poly(U) RNA oligomers. Required for cell cycle progression, specifically for the transition from metaphase to anaphase. This chain is Cytoplasmic polyadenylation element-binding protein 2 (Cpeb2), found in Mus musculus (Mouse).